The sequence spans 353 residues: C-C chemokine receptor type 8 (353 aa).

The Extracellular segment spans residues 1-33; it reads MDYTMEPNVTMTDYYPDFFTAPCDAEFLLRGSM. N-linked (GlcNAc...) asparagine glycosylation occurs at N8. Residues 34–61 form a helical membrane-spanning segment; sequence LYLAILYCVLFVLGLLGNSLVILVLVGC. Residues 62-71 lie on the Cytoplasmic side of the membrane; it reads KKLRSITDIY. Residues 72–91 traverse the membrane as a helical segment; the sequence is LLNLAASDLLFVLSIPFQTH. Over 92 to 105 the chain is Extracellular; sequence NLLDQWVFGTAMCK. Cysteines 104 and 181 form a disulfide. A helical membrane pass occupies residues 106 to 127; sequence VVSGLYYIGFFSSMFFITLMSV. The Cytoplasmic segment spans residues 128-144; that stretch reads DRYLAIVHAVYAIKVRT. Residues 145–169 form a helical membrane-spanning segment; it reads ASVGTALSLTVWLAAVTATIPLMVF. At 170 to 200 the chain is on the extracellular side; that stretch reads YQVASEDGMLQCFQFYEEQSLRWKLFTHFEI. The helical transmembrane segment at 201-220 threads the bilayer; it reads NALGLLLPFAILLFCYVRIL. The Cytoplasmic portion of the chain corresponds to 221-236; sequence QQLRGCLNHNRTRAIK. Residues 237–261 form a helical membrane-spanning segment; sequence LVLTVVIVSLLFWVPFNVALFLTSL. The Extracellular portion of the chain corresponds to 262 to 278; it reads HDLHILDGCATRQRLAL. The helical transmembrane segment at 279-302 threads the bilayer; it reads AIHVTEVISFTHCCVNPVIYAFIG. At 303-353 the chain is on the cytoplasmic side; sequence EKFKKHLMDVFQKSCSHIFLYLGRQMPVGALERQLSSNQRSSHSSTLDDIL.

Belongs to the G-protein coupled receptor 1 family. As to expression, expressed in thymus.

The protein localises to the cell membrane. Its function is as follows. Receptor for the CCL1/SCY1/TCA-3 chemokine. The sequence is that of C-C chemokine receptor type 8 (Ccr8) from Mus musculus (Mouse).